Consider the following 247-residue polypeptide: Protein NipSnap homolog 3B (247 aa).

N6-succinyllysine occurs at positions 45, 48, 57, and 166.

Belongs to the NipSnap family.

It localises to the cytoplasm. Its subcellular location is the cytosol. The protein is Protein NipSnap homolog 3B (Nipsnap3b) of Mus musculus (Mouse).